The chain runs to 545 residues: High-molecular-weight cytochrome c (545 aa).

An N-terminal signal peptide occupies residues 1–31 (MRNGRTLLRWAGVLAATAIIGVGGFWSQGTT). His66, His69, Cys80, Cys83, His84, His111, Cys114, Cys117, His118, Cys135, Cys138, His139, His159, His162, Cys178, Cys181, His182, His183, Cys202, Cys205, His206, His222, Cys225, Cys228, His229, Cys244, Cys247, His248, His298, His301, Cys308, Cys311, His312, His313, Cys319, Cys322, His323, His341, Cys349, Cys352, His353, Cys362, Cys365, His366, Cys378, Cys381, His382, His449, His470, Cys477, Cys480, His481, His482, Cys493, Cys496, His497, His516, Cys519, Cys522, His523, Cys536, Cys539, and His540 together coordinate heme c.

Monomer. Binds 16 heme c groups per subunit. High-spin heme 15 has single axial histidine ligand and the other hemes are low-spin bis-histidinyl coordinated.

The protein localises to the periplasm. In terms of biological role, HMWC (high-molecular-weight cytochrome c), ORF2, ORF3, ORF4, ORF5 and ORF6 in the HMC operon form a transmembrane protein complex that allows electron flow from the periplasmic hydrogenase to the cytoplasmic enzymes that catalyze reduction of sulfates. In Nitratidesulfovibrio vulgaris (strain ATCC 29579 / DSM 644 / CCUG 34227 / NCIMB 8303 / VKM B-1760 / Hildenborough) (Desulfovibrio vulgaris), this protein is High-molecular-weight cytochrome c (hmcA).